The sequence spans 462 residues: Elongation factor 1-alpha, somatic form (462 aa).

The residue at position 2 (Gly-2) is a N,N,N-trimethylglycine. The 238-residue stretch at 5–242 folds into the tr-type G domain; it reads KTHINIVVIG…DCILPPSRPT (238 aa). Residues 14 to 21 are G1; sequence GHVDSGKS. 14–21 is a GTP binding site; that stretch reads GHVDSGKS. Positions 70 to 74 are G2; that stretch reads GITID. Residues 91 to 94 form a G3 region; the sequence is DAPG. Residues 91–95 and 153–156 contribute to the GTP site; these read DAPGH and NKMD. The tract at residues 153-156 is G4; the sequence is NKMD. A G5 region spans residues 194–196; the sequence is SGW. 2 positions are modified to 5-glutamyl glycerylphosphorylethanolamine: Glu-301 and Glu-374.

This sequence belongs to the TRAFAC class translation factor GTPase superfamily. Classic translation factor GTPase family. EF-Tu/EF-1A subfamily.

The protein localises to the cytoplasm. Its function is as follows. This protein promotes the GTP-dependent binding of aminoacyl-tRNA to the A-site of ribosomes during protein biosynthesis. This is Elongation factor 1-alpha, somatic form (eef1as) from Xenopus laevis (African clawed frog).